We begin with the raw amino-acid sequence, 158 residues long: Small ribosomal subunit protein uS9 (158 aa).

Belongs to the universal ribosomal protein uS9 family.

This is Small ribosomal subunit protein uS9 from Rhodopseudomonas palustris (strain BisA53).